A 1015-amino-acid polypeptide reads, in one-letter code: SPOC domain-containing protein 1 (1015 aa).

Disordered stretches follow at residues 73–97, 118–159, 213–320, and 344–406; these read MVSP…SPVL, GFSL…EPGG, LYPE…PRLE, and AASS…MTPL. Basic and acidic residues predominate over residues 304–320; the sequence is SQDHAEGASKKDFPRLE. Residues 373 to 382 are compositionally biased toward polar residues; that stretch reads AHPTPCQSDP. Residues 388–397 show a composition bias toward basic and acidic residues; sequence AEPHQQRAED. The 121-residue stretch at 410-530 folds into the TFIIS central domain; that stretch reads VRSTVVRAMQ…IIEQQQKELY (121 aa). The disordered stretch occupies residues 643-685; it reads IQKAPGPAPASSPEVLKVGETPPKEPQDRLQMPAGLKNAPPSP. Residues 688–791 form the SPOC domain; that stretch reads WEGSLDMFSI…VQQVKMVLLP (104 aa). 2 disordered regions span residues 858 to 906 and 967 to 1015; these read PEDR…PGWG and QSQD…EHEC. The segment covering 967–978 has biased composition (polar residues); sequence QSQDSLPPSTVV.

In terms of assembly, interacts with DNMT3A, DNMT3C and DNMT3L. Interacts with C19orf84 homolog. Interacts with SPIN1; promoting recruitment to transposons marked with histone H3 trimethylated at both 'Lys-4' and 'Lys-9' (H3K4me3K9me3).

Its subcellular location is the nucleus. The protein resides in the chromosome. Functionally, protein adapter that acts as an essential executor of PIWIL4-piRNA pathway directed transposon DNA methylation and silencing in the male embryonic germ cells. Recruited to young transposons, which are specifically marked with histone H3 trimethylated at both 'Lys-4' and 'Lys-9' (H3K4me3K9me3), via its association with SPIN1 chromatin reader, and associates with the de novo DNA methylation machinery and repressive chromatin remodeling complexes. Following this, PIWIL4 engages with nascent transposable element transcript to direct piRNA-directed DNA methylation. Not required for piRNA biosynthesis. In Mus musculus (Mouse), this protein is SPOC domain-containing protein 1.